A 161-amino-acid polypeptide reads, in one-letter code: ATP synthase subunit b' (161 aa).

Residues 26 to 45 (LPLMAIQFLLLAFVLDKIFY) form a helical membrane-spanning segment.

Belongs to the ATPase B chain family. F-type ATPases have 2 components, F(1) - the catalytic core - and F(0) - the membrane proton channel. F(1) has five subunits: alpha(3), beta(3), gamma(1), delta(1), epsilon(1). F(0) has four main subunits: a(1), b(1), b'(1) and c(10-14). The alpha and beta chains form an alternating ring which encloses part of the gamma chain. F(1) is attached to F(0) by a central stalk formed by the gamma and epsilon chains, while a peripheral stalk is formed by the delta, b and b' chains.

It is found in the cellular thylakoid membrane. Functionally, f(1)F(0) ATP synthase produces ATP from ADP in the presence of a proton or sodium gradient. F-type ATPases consist of two structural domains, F(1) containing the extramembraneous catalytic core and F(0) containing the membrane proton channel, linked together by a central stalk and a peripheral stalk. During catalysis, ATP synthesis in the catalytic domain of F(1) is coupled via a rotary mechanism of the central stalk subunits to proton translocation. Its function is as follows. Component of the F(0) channel, it forms part of the peripheral stalk, linking F(1) to F(0). The b'-subunit is a diverged and duplicated form of b found in plants and photosynthetic bacteria. In Trichodesmium erythraeum (strain IMS101), this protein is ATP synthase subunit b'.